Here is a 467-residue protein sequence, read N- to C-terminus: Cysteine--tRNA ligase (467 aa).

A Zn(2+)-binding site is contributed by Cys28. The short motif at 30–40 is the 'HIGH' region element; that stretch reads ITAYDYSHIGH. Residues Cys211, His236, and Glu240 each coordinate Zn(2+). The 'KMSKS' region signature appears at 268–272; the sequence is KMSKS. ATP is bound at residue Lys271.

It belongs to the class-I aminoacyl-tRNA synthetase family. Zn(2+) serves as cofactor.

The protein resides in the cytoplasm. The enzyme catalyses tRNA(Cys) + L-cysteine + ATP = L-cysteinyl-tRNA(Cys) + AMP + diphosphate. The sequence is that of Cysteine--tRNA ligase (cysS) from Archaeoglobus fulgidus (strain ATCC 49558 / DSM 4304 / JCM 9628 / NBRC 100126 / VC-16).